The sequence spans 768 residues: Cullin-3 (768 aa).

At serine 2 the chain carries N-acetylserine. Residues 2–41 (SNLSKGTGSRKDTKMRIRAFPMTMDEKYVNSIWDLLKNAI) form an interaction with KLHL18 region. Serine 585 bears the Phosphoserine mark. The disordered stretch occupies residues 677–698 (VAAKQGESDPERKETRQKVDDD). Residues 682–698 (GESDPERKETRQKVDDD) show a composition bias toward basic and acidic residues. Residues 698–760 (DRKHEIEAAI…REYLARTPED (63 aa)) enclose the Cullin neddylation domain. Lysine 712 is covalently cross-linked (Glycyl lysine isopeptide (Lys-Gly) (interchain with G-Cter in NEDD8)).

The protein belongs to the cullin family. Forms neddylation-dependent homodimers. Component of multiple BCR (BTB-CUL3-RBX1) E3 ubiquitin-protein ligase complexes formed of CUL3, RBX1 and a variable BTB domain-containing protein acting as both, adapter to cullin and substrate recognition subunit. The BCR complex may be active as a heterodimeric complex, in which NEDD8, covalently attached to one CUL3 molecule, binds to the C-terminus of a second CUL3 molecule. Interacts with RBX1, RNF7, CYCE and TIP120A/CAND1. Part of the BCR(SPOP) containing SPOP, and of BCR containing homodimeric SPOPL or the heterodimer formed by SPOP and SPOPL. Part of the probable BCR(KLHL9-KLHL13) complex with BTB domain proteins KLHL9 and KLHL13. Part of the BCR(KLHL41) complex containing KLHL41. Component of the BCR(KLHL12) E3 ubiquitin ligase complex, at least composed of CUL3 and KLHL12 and RBX1. Component of the BCR(KLHL3) E3 ubiquitin ligase complex, at least composed of CUL3 and KLHL3 and RBX1. Part of the BCR(ENC1) complex containing ENC1. Part of a complex consisting of BMI1/PCGF4, CUL3 and SPOP. Part of a complex consisting of BRMS1, CUL3 and SPOP. Component of the BCR(KLHL21) E3 ubiquitin ligase complex, at least composed of CUL3, KLHL21 and RBX1. Component of the BCR(KLHL22) E3 ubiquitin ligase complex, at least composed of CUL3, KLHL22 and RBX1. Component of the BCR(KLHL25) E3 ubiquitin ligase complex, at least composed of CUL3, KLHL25 and RBX1. Part of a complex consisting of MACROH2A1, CUL3 and SPOP. Component of the BCR(KLHL42) E3 ubiquitin ligase complex, at least composed of CUL3 and KLHL42. Interacts with KLHL42 (via the BTB domain). Interacts with KATNA1; the interaction is enhanced by KLHL42. Component of the BCR(KBTBD8) E3 ubiquitin ligase complex, at least composed of CUL3, KBTBD8 and RBX1. Interacts with KCTD5, KLHL9, KLHL11, KLHL13, GAN, ZBTB16, KLHL3, KLHL15, KLHL20, KLHL36, GMCL2, BTBD1. Part of a complex that contains CUL3, RBX1 and GAN. Interacts (via BTB domain) with KLHL17; the interaction regulates surface GRIK2 expression. Interacts with KCTD7. Part of the BCR(GAN) complex containing GAN. Part of the BCR(KEAP1) complex containing KEAP1. Interacts with KLHL10. Interacts with KAT5 and ATF2. Interacts with KCTD17 in the BCR(KCTD17) E3 ubiquitin ligase complex, at least composed of CUL3, KCTD17 and RBX1. Interacts (when neddylated) with ARIH1; leading to activate the E3 ligase activity of ARIH1. Interacts with COPS9 isoform 2. Interacts with PPP2R5B; this interaction is indirect and mediated through KLHL15-binding and leads to PPP2R5B proteasomal degradation. Interacts with RBBP8/CtIP; this interaction is indirect and mediated through KLHL15-binding and leads to RBBP8 proteasomal degradation. Interacts with KLHL24 in the BCR(KLHL24) E3 ubiquitin ligase complex, composed of CUL3, RBX1 and KLHL24. Interacts with RHOBTB2. Interacts with AURKA and KLHL18 (via BTB domain). Interacts (unneddylated form) with DCUN1D1, DCUN1D2, DCUN1D3, DCUN1D4 and DCUN1D5; these interactions promote the cullin neddylation. Component of a BCR3 (BTB-CUL3-RBX1) E3 ubiquitin ligase complex, also named Cul3-RING ubiquitin ligase complex CUL3(KBTBD6/7), composed of CUL3, RBX1, KBTBD6 and KBTBD7. Component of the BCR(KBTBD2) E3 ubiquitin ligase complex, at least composed of CUL3, KBTBD2 and RBX1. Interacts with KBTBD2 (via the BTB domain). Component of the BCR(KBTBD4) E3 ubiquitin ligase complex, at least composed of CUL3, KBTBD4 and RBX1. Component of the BCR(ARMC5) E3 ubiquitin ligase complex, composed of CUL3, ARMC5 and RBX1. In terms of processing, neddylated. Attachment of NEDD8 is required for the E3 ubiquitin-protein ligase activity of the BCR complex. Deneddylated via its interaction with the COP9 signalosome (CSN) complex. In terms of tissue distribution, brain, spermatozoa, and testis (at protein level). Widely expressed.

It localises to the nucleus. It is found in the golgi apparatus. Its subcellular location is the cell projection. The protein resides in the cilium. The protein localises to the flagellum. It localises to the cytoplasm. It is found in the cytoskeleton. Its subcellular location is the spindle. The protein resides in the microtubule organizing center. The protein localises to the centrosome. It localises to the spindle pole. The protein operates within protein modification; protein ubiquitination. Its function is as follows. Core component of multiple cullin-RING-based BCR (BTB-CUL3-RBX1) E3 ubiquitin-protein ligase complexes which mediate the ubiquitination and subsequent proteasomal degradation of target proteins. BCR complexes and ARIH1 collaborate in tandem to mediate ubiquitination of target proteins. As a scaffold protein may contribute to catalysis through positioning of the substrate and the ubiquitin-conjugating enzyme. The E3 ubiquitin-protein ligase activity of the complex is dependent on the neddylation of the cullin subunit and is inhibited by the association of the deneddylated cullin subunit with TIP120A/CAND1. The functional specificity of the BCR complex depends on the BTB domain-containing protein as the substrate recognition component. BCR(KLHL42) is involved in ubiquitination of KATNA1. BCR(SPOP) is involved in ubiquitination of BMI1/PCGF4, BRMS1, MACROH2A1 and DAXX, GLI2 and GLI3. Can also form a cullin-RING-based BCR (BTB-CUL3-RBX1) E3 ubiquitin-protein ligase complex containing homodimeric SPOPL or the heterodimer formed by SPOP and SPOPL; these complexes have lower ubiquitin ligase activity. BCR(KLHL9-KLHL13) controls the dynamic behavior of AURKB on mitotic chromosomes and thereby coordinates faithful mitotic progression and completion of cytokinesis. BCR(KLHL12) is involved in ER-Golgi transport by regulating the size of COPII coats, thereby playing a key role in collagen export, which is required for embryonic stem (ES) cells division: BCR(KLHL12) acts by mediating monoubiquitination of SEC31 (SEC31A or SEC31B). BCR(KLHL3) acts as a regulator of ion transport in the distal nephron; by mediating ubiquitination of WNK4. The BCR(KLHL20) E3 ubiquitin ligase complex is involved in interferon response and anterograde Golgi to endosome transport: it mediates both ubiquitination leading to degradation and 'Lys-33'-linked ubiquitination. The BCR(KLHL21) E3 ubiquitin ligase complex regulates localization of the chromosomal passenger complex (CPC) from chromosomes to the spindle midzone in anaphase and mediates the ubiquitination of AURKB. The BCR(KLHL22) ubiquitin ligase complex mediates monoubiquitination of PLK1, leading to PLK1 dissociation from phosphoreceptor proteins and subsequent removal from kinetochores, allowing silencing of the spindle assembly checkpoint (SAC) and chromosome segregation. The BCR(KLHL22) ubiquitin ligase complex is also responsible for the amino acid-stimulated 'Lys-48' polyubiquitination and proteasomal degradation of DEPDC5. Through the degradation of DEPDC5, releases the GATOR1 complex-mediated inhibition of the TORC1 pathway. The BCR(KLHL25) ubiquitin ligase complex is involved in translational homeostasis by mediating ubiquitination and subsequent degradation of hypophosphorylated EIF4EBP1 (4E-BP1). The BCR(KLHL25) ubiquitin ligase complex is also involved in lipid synthesis by mediating ubiquitination and degradation of ACLY. The BCR(KBTBD8) complex acts by mediating monoubiquitination of NOLC1 and TCOF1, leading to remodel the translational program of differentiating cells in favor of neural crest specification. Involved in ubiquitination of cyclin E and of cyclin D1 (in vitro) thus involved in regulation of G1/S transition. Involved in the ubiquitination of KEAP1, ENC1 and KLHL41. In concert with ATF2 and RBX1, promotes degradation of KAT5 thereby attenuating its ability to acetylate and activate ATM. The BCR(KCTD17) E3 ubiquitin ligase complex mediates ubiquitination and degradation of TCHP, a down-regulator of cilium assembly, thereby inducing ciliogenesis. The BCR(KLHL24) E3 ubiquitin ligase complex mediates ubiquitination of KRT14, controls KRT14 levels during keratinocytes differentiation, and is essential for skin integrity. The BCR(KLHL18) E3 ubiquitin ligase complex mediates the ubiquitination of AURKA leading to its activation at the centrosome which is required for initiating mitotic entry. The BCR(KEAP1) E3 ubiquitin ligase complex acts as a key sensor of oxidative and electrophilic stress by mediating ubiquitination and degradation of NFE2L2/NRF2, a transcription factor regulating expression of many cytoprotective genes. As part of the CUL3(KBTBD6/7) E3 ubiquitin ligase complex functions mediates 'Lys-48' ubiquitination and proteasomal degradation of TIAM1. By controlling the ubiquitination of that RAC1 guanine exchange factors (GEF), regulates RAC1 signal transduction and downstream biological processes including the organization of the cytoskeleton, cell migration and cell proliferation. The BCR(KBTBD4) E3 ubiquitin ligase complex targets CoREST corepressor complex components RCOR1, KDM1A/LSD1 and HDAC2 for proteasomal degradation with RCOR1 likely to be the primary target while degradation of KDM1A and HDAC2 is likely due to their association with RCOR1. It also targets RCOR3, MIER2 and MIER3 for proteasomal degradation as well as associated proteins ZNF217 and RREB1 with degradation being dependent on the presence of an ELM2 domain in the target proteins. The BCR(ARMC5) complex mediates premature transcription termination of transcripts that are unfavorably configured for transcriptional elongation by mediating ubiquitination of Pol II subunit POLR2A. Required for 'Lys-63'-linked ubiquitination of large ribosomal subunit protein MRPL12. In Homo sapiens (Human), this protein is Cullin-3.